The sequence spans 447 residues: Elongation factor 1-alpha (447 aa).

In terms of domain architecture, tr-type G spans 5 to 230 (KTHINIVVIG…DQINEPKRPS (226 aa)). The segment at 14 to 21 (GHVDSGKS) is G1. 14 to 21 (GHVDSGKS) contributes to the GTP binding site. Lys-55 bears the N6,N6-dimethyllysine mark. Residues 70-74 (GITID) form a G2 region. An N6,N6,N6-trimethyllysine modification is found at Lys-79. Residues 91–94 (DAPG) form a G3 region. GTP contacts are provided by residues 91–95 (DAPGH) and 153–156 (NKMD). The tract at residues 153 to 156 (NKMD) is G4. An N6,N6,N6-trimethyllysine modification is found at Lys-187. The tract at residues 194–196 (SGF) is G5. Position 261 is an N6-methyllysine (Lys-261). A 5-glutamyl glycerylphosphorylethanolamine modification is found at Glu-289. Lys-306 carries the post-translational modification N6,N6,N6-trimethyllysine. A 5-glutamyl glycerylphosphorylethanolamine modification is found at Glu-362. An N6,N6,N6-trimethyllysine modification is found at Lys-396.

It belongs to the TRAFAC class translation factor GTPase superfamily. Classic translation factor GTPase family. EF-Tu/EF-1A subfamily.

It is found in the cytoplasm. In terms of biological role, this protein promotes the GTP-dependent binding of aminoacyl-tRNA to the A-site of ribosomes during protein biosynthesis. The chain is Elongation factor 1-alpha (REFA1) from Oryza sativa subsp. japonica (Rice).